A 122-amino-acid polypeptide reads, in one-letter code: Large ribosomal subunit protein uL14 (122 aa).

This sequence belongs to the universal ribosomal protein uL14 family. As to quaternary structure, part of the 50S ribosomal subunit. Forms a cluster with proteins L3 and L19. In the 70S ribosome, L14 and L19 interact and together make contacts with the 16S rRNA in bridges B5 and B8.

Its function is as follows. Binds to 23S rRNA. Forms part of two intersubunit bridges in the 70S ribosome. The protein is Large ribosomal subunit protein uL14 of Mycoplasma genitalium (strain ATCC 33530 / DSM 19775 / NCTC 10195 / G37) (Mycoplasmoides genitalium).